Reading from the N-terminus, the 42-residue chain is Large ribosomal subunit protein bL36 (42 aa).

Belongs to the bacterial ribosomal protein bL36 family.

This chain is Large ribosomal subunit protein bL36, found in Ehrlichia ruminantium (strain Gardel).